The primary structure comprises 361 residues: Chorismate synthase (361 aa).

Arg-48 lines the NADP(+) pocket. FMN contacts are provided by residues 125–127 (RSS), 238–239 (NA), Gly-278, 293–297 (KPTSS), and Arg-319.

Belongs to the chorismate synthase family. Homotetramer. It depends on FMNH2 as a cofactor.

It carries out the reaction 5-O-(1-carboxyvinyl)-3-phosphoshikimate = chorismate + phosphate. Its pathway is metabolic intermediate biosynthesis; chorismate biosynthesis; chorismate from D-erythrose 4-phosphate and phosphoenolpyruvate: step 7/7. In terms of biological role, catalyzes the anti-1,4-elimination of the C-3 phosphate and the C-6 proR hydrogen from 5-enolpyruvylshikimate-3-phosphate (EPSP) to yield chorismate, which is the branch point compound that serves as the starting substrate for the three terminal pathways of aromatic amino acid biosynthesis. This reaction introduces a second double bond into the aromatic ring system. This is Chorismate synthase from Aliivibrio fischeri (strain MJ11) (Vibrio fischeri).